The sequence spans 66 residues: Sarcoplasmic/endoplasmic reticulum calcium ATPase regulator ARLN (66 aa).

Methionine 1 bears the N-acetylmethionine mark. A disordered region spans residues 1-38 (MEVDVPGVDGRDGLRERRGLSEGGRQNLDVRPQSGANG). Over residues 9 to 20 (DGRDGLRERRGL) the composition is skewed to basic and acidic residues. Residues 45-65 (WLDLWLFIFFDVVVFLFVYFL) traverse the membrane as a helical segment.

As to quaternary structure, homooligomer. Can also form heterooligomers with other sarcoplasmic/endoplasmic reticulum calcium ATPase (SERCA) regulators ERLN, PLN, SLN and STRIT1/DWORF. Monomer. Interacts as a monomer with ATP2A2/SERCA2; the interaction results in inhibition of ATP2A2 Ca(2+) affinity.

It localises to the endoplasmic reticulum membrane. In terms of biological role, inhibits the activity of the calcium ATPases ATP2A2/SERCA2 and ATP2A3/SERCA3 by decreasing their apparent affinity for Ca(2+). This Pongo abelii (Sumatran orangutan) protein is Sarcoplasmic/endoplasmic reticulum calcium ATPase regulator ARLN (ARLN).